We begin with the raw amino-acid sequence, 393 residues long: Lysine/ornithine decarboxylase (393 aa).

Lys-51 bears the N6-(pyridoxal phosphate)lysine mark. Cys-323 functions as the Proton donor; shared with dimeric partner in the catalytic mechanism.

The protein belongs to the Orn/Lys/Arg decarboxylase class-II family. In terms of assembly, homodimer. Requires pyridoxal 5'-phosphate as cofactor.

The catalysed reaction is L-lysine + H(+) = cadaverine + CO2. The enzyme catalyses L-ornithine + H(+) = putrescine + CO2. The protein operates within amine and polyamine biosynthesis; putrescine biosynthesis via L-ornithine pathway; putrescine from L-ornithine: step 1/1. With respect to regulation, inhibited competitively by both alpha-difluoromethyllysine and alpha-difluoromethylornithine. Its function is as follows. Decarboxylates both L-lysine and L-ornithine with similar catalytic efficiency. This chain is Lysine/ornithine decarboxylase (ldc), found in Selenomonas ruminantium.